Here is a 212-residue protein sequence, read N- to C-terminus: Octanoyltransferase (212 aa).

Positions 34–208 (GQRQDTLILL…AFERQFNARC (175 aa)) constitute a BPL/LPL catalytic domain. Substrate contacts are provided by residues 72 to 79 (RGGQVTYH), 139 to 141 (SIG), and 152 to 154 (GLS). Cys-170 acts as the Acyl-thioester intermediate in catalysis.

This sequence belongs to the LipB family.

It localises to the cytoplasm. It catalyses the reaction octanoyl-[ACP] + L-lysyl-[protein] = N(6)-octanoyl-L-lysyl-[protein] + holo-[ACP] + H(+). The protein operates within protein modification; protein lipoylation via endogenous pathway; protein N(6)-(lipoyl)lysine from octanoyl-[acyl-carrier-protein]: step 1/2. Functionally, catalyzes the transfer of endogenously produced octanoic acid from octanoyl-acyl-carrier-protein onto the lipoyl domains of lipoate-dependent enzymes. Lipoyl-ACP can also act as a substrate although octanoyl-ACP is likely to be the physiological substrate. The sequence is that of Octanoyltransferase from Magnetococcus marinus (strain ATCC BAA-1437 / JCM 17883 / MC-1).